The following is a 447-amino-acid chain: MEKRVEKRRIVLVPLPLLGHFTPMMQLGQALILKGFSIIVPQGEFNRVNSSQKFPGFQFITIPDSELEANGPVGSLTQLNKIMEASFKDCIRQLLKQQGNDIACIIYDEFMYFCGAVAEELKLPNFIFSTQTATHKVCCNVLSKLNAKKYLIDMEEHDVQNKVVENMHPLRYKDLPTATFGELEPFLELCRDVVNKRTASAVIINTVTCLESSSLTRLQQELQIPVYPLGPLHITDSSTGFTVLQEDRSCVEWLNKQKPRSVIYISLGSMVLMETKEMLEMAWGMLNSNQPFLWVIRPGSVSGSEGIESLPEEVSKMVLEKGYIVKWAPQIEVLGHPSVGGFWSHCGWNSTLESIVEGVPMICRPYQGEQMLNAIYLESVWRIGIQVGGELERGAVERAVKRLIVDKEGASMRERTLVLKEKLKASIRGGGSSCNALDELVKHLKTE.

UDP-alpha-D-glucose contacts are provided by residues serine 269, 328–330 (APQ), 345–353 (HCGWNSTLE), and 367–370 (QGEQ).

This sequence belongs to the UDP-glycosyltransferase family.

The protein is UDP-glycosyltransferase 76E3 (UGT76E3) of Arabidopsis thaliana (Mouse-ear cress).